The chain runs to 662 residues: Forkhead box protein O1 (662 aa).

Disordered stretches follow at residues Met1–Ser62 and Gly122–Asn165. A Phosphothreonine; by PKB/AKT1 or PKB/AKT2 and SGK1 modification is found at Thr24. The segment covering Ser33–Ser62 has biased composition (low complexity). The span at Pro126–Pro146 shows a compositional bias: pro residues. The fork-head DNA-binding region spans Trp167–Ala261. DNA-binding regions lie at residues Asn218 to Ser225 and Ser241 to Trp244. Phosphoserine; by STK4/MST1 is present on Ser219. Ser225, Ser241, and Ser242 each carry phosphoserine. The disordered stretch occupies residues Ser241–Gln342. 2 positions are modified to N6-acetyllysine: Lys252 and Lys255. Ser256 carries the post-translational modification Phosphoserine; by CDK1. An omega-N-methylarginine; by PRMT1 mark is found at Arg258 and Arg260. The Nuclear localization signal signature appears at Arg258–Arg260. Ser263 carries the post-translational modification Phosphoserine; by PKB/AKT1 and SGK1. N6-acetyllysine is present on residues Lys269, Lys272, and Lys281. Residues Ala271 to Ala282 show a composition bias toward basic residues. The segment at Gly290–Gln570 is sufficient for interaction with NLK. 2 positions are modified to phosphoserine: Ser294 and Ser305. Residues Asn316 to Gly333 show a composition bias toward polar residues. A Phosphoserine; by PKB/AKT1 modification is found at Ser326. Ser329 bears the Phosphoserine; by CK1 and SGK1 mark. Phosphoserine; by CK1 is present on Ser332. The residue at position 336 (Ser336) is a Phosphoserine; by DYRK1A. Thr340 bears the Phosphothreonine mark. The interval Ser370 to Ala466 is required for interaction with RUNX2. N6-acetyllysine is present on Lys430. Residues Leu469–Leu473 carry the Required for interaction with SIRT1 motif.

Interacts with LRPPRC. Interacts with RUNX2; the interaction inhibits RUNX2 transcriptional activity and mediates the IGF1/insulin-dependent BGLAP expression in osteoblasts Interacts with PPP2R1A; the interaction regulates the dephosphorylation of FOXO1 at Thr-24 and Ser-263 leading to its nuclear import. Interacts with NLK. Interacts with SIRT1; the interaction results in the deacetylation of FOXO1 leading to activation of FOXO1-mediated transcription of genes involved in DNA repair and stress resistance. Binds to CDK1. Interacts with the 14-3-3 proteins, YWHAG and YWHAZ; the interactions require insulin-stimulated phosphorylation on Thr-24, promote nuclear exit and loss of transcriptional activity. Interacts with SKP2; the interaction ubiquitinates FOXO1 leading to its proteasomal degradation. The interaction requires the presence of KRIT1. Interacts (via the C-terminal half) with ATF4 (via its DNA binding domain); the interaction occurs in osteoblasts, regulates glucose homeostasis via suppression of beta-cell proliferation and subsequent decrease in insulin production. Interacts with PRMT1; the interaction methylates FOXO1, prevents PKB/AKT1 phosphorylation and retains FOXO1 in the nucleus. Interacts with EP300 and CREBBP; the interactions acetylate FOXO1. Interacts with SIRT2; the interaction is disrupted in response to oxidative stress or serum deprivation, leading to increased level of acetylated FOXO1, which promotes stress-induced autophagy by stimulating E1-like activating enzyme ATG7. Interacts (acetylated form) with ATG7; the interaction is increased in response to oxidative stress or serum deprivation and promotes the autophagic process leading to cell death. Interacts (acetylated form) with PPARG. Interacts with XBP1; this interaction is direct and leads to FOXO1 ubiquitination and degradation via the proteasome pathway. Interacts (via the Fork-head domain) with CEBPA; the interaction increases when FOXO1 is deacetylated. Interacts with WDFY2. Forms a complex with WDFY2 and AKT1. Interacts with CRY1. Interacts with PPIA/CYPA; the interaction promotes FOXO1 dephosphorylation, nuclear accumulation and transcriptional activity. Interacts with TOX4; FOXO1 is required for full induction of TOX4-dependent activity and the interaction is inhibited by insulin. Interacts (when phosphorylated on Ser-263) with STUB1/CHIP. In terms of processing, phosphorylation by NLK promotes nuclear export and inhibits the transcriptional activity. In response to growth factors, phosphorylation on Thr-24, Ser-263 and Ser-326 by PKB/AKT1 promotes nuclear export and inactivation of transactivational activity. Phosphorylation on Thr-24 is required for binding 14-3-3 proteins. Phosphorylation of Ser-263 decreases DNA-binding activity and promotes the phosphorylation of Thr-24 and Ser-326, permitting phosphorylation of Ser-329 and Ser-332, probably by CDK1, leading to nuclear exclusion and loss of function. Stress signals, such as response to oxygen or nitric oxide, attenuate the PKB/AKT1-mediated phosphorylation leading to nuclear retention. Phosphorylation of Ser-336 is independent of IGF1 and leads to reduced function. Dephosphorylated on Thr-24 and Ser-263 by PP2A in beta-cells under oxidative stress leading to nuclear retention. Phosphorylation of Ser-256 by CDK1 disrupts binding of 14-3-3 proteins leading to nuclear accumulation and has no effect on DNA binding nor transcriptional activity. Phosphorylation by STK4/MST1 on Ser-219, upon oxidative stress, inhibits binding to 14-3-3 proteins and nuclear export. PPIA/CYPA promotes its dephosphorylation on Ser-263. Ubiquitinated by SKP2. Ubiquitination leads to proteasomal degradation. Ubiquitinated by STUB1/CHIP; when Ser-263 is phosphorylated. Post-translationally, methylation inhibits AKT1-mediated phosphorylation at Ser-263 and is increased by oxidative stress. In terms of processing, acetylated. Acetylation at Lys-269 and Lys-281 are necessary for autophagic cell death induction. Deacetylated by SIRT2 in response to oxidative stress or serum deprivation, thereby negatively regulating FOXO1-mediated autophagic cell death. Once in the nucleus, acetylated by CREBBP/EP300. Acetylation diminishes the interaction with target DNA and attenuates the transcriptional activity. It increases the phosphorylation at Ser-263. Deacetylation by SIRT1 results in reactivation of the transcriptional activity. Oxidative stress by hydrogen peroxide treatment appears to promote deacetylation and uncoupling of insulin-induced phosphorylation. By contrast, resveratrol acts independently of acetylation. Acetylated at Lys-430, promoting its localization to the nucleus and transcription factor activity. Deacetylation at Lys-430 by SIRT6, promotes its translocation into the cytoplasm, preventing its transcription factor activity. Deacetylation and subsequent inhibition by SIRT6 has different effects depending on cell types: it inhibits gluconeogenesis in hepatocytes, promotes glucose sensing in pancreatic beta-cells and regulates lipid catabolism in brown adipocytes. In terms of tissue distribution, highly in subcutaneous adipose and visceral adipose tissues. Levels higher in piglets than in adults. Also expressed at lower levels in liver and muscle.

It localises to the cytoplasm. The protein resides in the nucleus. Functionally, transcription factor that is the main target of insulin signaling and regulates metabolic homeostasis in response to oxidative stress. Binds to the insulin response element (IRE) with consensus sequence 5'-TT[G/A]TTTTG-3' and the related Daf-16 family binding element (DBE) with consensus sequence 5'-TT[G/A]TTTAC-3'. Activity suppressed by insulin. Main regulator of redox balance and osteoblast numbers and controls bone mass. Orchestrates the endocrine function of the skeleton in regulating glucose metabolism. Also acts as a key regulator of chondrogenic commitment of skeletal progenitor cells in response to lipid availability: when lipids levels are low, translocates to the nucleus and promotes expression of SOX9, which induces chondrogenic commitment and suppresses fatty acid oxidation. Acts synergistically with ATF4 to suppress osteocalcin/BGLAP activity, increasing glucose levels and triggering glucose intolerance and insulin insensitivity. Also suppresses the transcriptional activity of RUNX2, an upstream activator of osteocalcin/BGLAP. Acts as an inhibitor of glucose sensing in pancreatic beta cells by acting as a transcription repressor and suppressing expression of PDX1. In hepatocytes, promotes gluconeogenesis by acting together with PPARGC1A and CEBPA to activate the expression of genes such as IGFBP1, G6PC1 and PCK1. Also promotes gluconeogenesis by directly promoting expression of PPARGC1A and G6PC1. Important regulator of cell death acting downstream of CDK1, PKB/AKT1 and STK4/MST1. Promotes neural cell death. Mediates insulin action on adipose tissue. Regulates the expression of adipogenic genes such as PPARG during preadipocyte differentiation and, adipocyte size and adipose tissue-specific gene expression in response to excessive calorie intake. Regulates the transcriptional activity of GADD45A and repair of nitric oxide-damaged DNA in beta-cells. Required for the autophagic cell death induction in response to starvation or oxidative stress in a transcription-independent manner. Mediates the function of MLIP in cardiomyocytes hypertrophy and cardiac remodeling. Positive regulator of apoptosis in cardiac smooth muscle cells as a result of its transcriptional activation of pro-apoptotic genes. Regulates endothelial cell (EC) viability and apoptosis in a PPIA/CYPA-dependent manner via transcription of CCL2 and BCL2L11 which are involved in EC chemotaxis and apoptosis. The protein is Forkhead box protein O1 (FOXO1) of Sus scrofa (Pig).